The primary structure comprises 449 residues: Exodeoxyribonuclease 7 large subunit (449 aa).

Belongs to the XseA family. As to quaternary structure, heterooligomer composed of large and small subunits.

Its subcellular location is the cytoplasm. The enzyme catalyses Exonucleolytic cleavage in either 5'- to 3'- or 3'- to 5'-direction to yield nucleoside 5'-phosphates.. Functionally, bidirectionally degrades single-stranded DNA into large acid-insoluble oligonucleotides, which are then degraded further into small acid-soluble oligonucleotides. This Salmonella typhimurium (strain LT2 / SGSC1412 / ATCC 700720) protein is Exodeoxyribonuclease 7 large subunit.